We begin with the raw amino-acid sequence, 88 residues long: Guanine nucleotide-binding protein subunit gamma (88 aa).

The S-palmitoyl cysteine moiety is linked to residue Cys84. The residue at position 85 (Cys85) is a Cysteine methyl ester. A lipid anchor (S-farnesyl cysteine) is attached at Cys85. A propeptide spans 86-88 (removed in mature form); that stretch reads TIM.

The protein belongs to the G protein gamma family. As to quaternary structure, g proteins are composed of 3 units, alpha, beta and gamma.

It is found in the membrane. The polypeptide is Guanine nucleotide-binding protein subunit gamma (Candida glabrata (strain ATCC 2001 / BCRC 20586 / JCM 3761 / NBRC 0622 / NRRL Y-65 / CBS 138) (Yeast)).